Consider the following 518-residue polypeptide: Mitochondrial 2-methylisocitrate lyase (518 aa).

It belongs to the isocitrate lyase/PEP mutase superfamily. Isocitrate lyase family.

The protein localises to the mitochondrion matrix. It localises to the cytoplasm. It catalyses the reaction (2S,3R)-3-hydroxybutane-1,2,3-tricarboxylate = pyruvate + succinate. It functions in the pathway organic acid metabolism; propanoate degradation. Functionally, catalyzes the formation of pyruvate and succinate from 2-methylisocitrate during the metabolism of endogenous propionyl-CoA. Does not act on isocitrate. This chain is Mitochondrial 2-methylisocitrate lyase (icl2), found in Schizosaccharomyces pombe (strain 972 / ATCC 24843) (Fission yeast).